We begin with the raw amino-acid sequence, 692 residues long: Elongation factor G (692 aa).

Positions 8–282 (PNTRNIGIMA…NVVAYLPSPV (275 aa)) constitute a tr-type G domain. GTP is bound by residues 17–24 (AHIDAGKT), 81–85 (DTPGH), and 135–138 (NKMD).

The protein belongs to the TRAFAC class translation factor GTPase superfamily. Classic translation factor GTPase family. EF-G/EF-2 subfamily.

The protein resides in the cytoplasm. Functionally, catalyzes the GTP-dependent ribosomal translocation step during translation elongation. During this step, the ribosome changes from the pre-translocational (PRE) to the post-translocational (POST) state as the newly formed A-site-bound peptidyl-tRNA and P-site-bound deacylated tRNA move to the P and E sites, respectively. Catalyzes the coordinated movement of the two tRNA molecules, the mRNA and conformational changes in the ribosome. In Brevibacillus brevis (strain 47 / JCM 6285 / NBRC 100599), this protein is Elongation factor G.